Reading from the N-terminus, the 502-residue chain is ATP synthase subunit alpha (502 aa).

The interval 115–135 is disordered; sequence VDGLGPINTTNTRPIESPAPG. 169-176 contacts ATP; that stretch reads GDRQTGKT.

This sequence belongs to the ATPase alpha/beta chains family. In terms of assembly, F-type ATPases have 2 components, CF(1) - the catalytic core - and CF(0) - the membrane proton channel. CF(1) has five subunits: alpha(3), beta(3), gamma(1), delta(1), epsilon(1). CF(0) has three main subunits: a(1), b(2) and c(9-12). The alpha and beta chains form an alternating ring which encloses part of the gamma chain. CF(1) is attached to CF(0) by a central stalk formed by the gamma and epsilon chains, while a peripheral stalk is formed by the delta and b chains.

The protein resides in the cell membrane. It catalyses the reaction ATP + H2O + 4 H(+)(in) = ADP + phosphate + 5 H(+)(out). In terms of biological role, produces ATP from ADP in the presence of a proton gradient across the membrane. The alpha chain is a regulatory subunit. The protein is ATP synthase subunit alpha of Bacillus mycoides (strain KBAB4) (Bacillus weihenstephanensis).